The following is a 303-amino-acid chain: NAD(+)--arginine ADP-ribosyltransferase Lart1 (303 aa).

It is found in the secreted. The catalysed reaction is L-arginyl-[protein] + NAD(+) = N(omega)-(ADP-D-ribosyl)-L-arginyl-[protein] + nicotinamide + H(+). ADP-ribosyltransferase that targets a specific class of NAD(+)-dependent glutamate dehydrogenase (GDH) enzymes found in fungi and protists, including many natural hosts of Legionella. Acts by targeting a conserved arginine residue in the NAD(+)-binding pocket of GDH, thereby blocking oxidative deamination of glutamate. Lart1 may target amoeba GDH to prevent a conserved stress response. In vitro, acts on Glud2 from the amoeba Dictyostelium discoideum (DdGluD2) and yeast Gdh2p but does not act on human or Legionella GDH homologs. This Legionella pneumophila subsp. pneumophila (strain Philadelphia 1 / ATCC 33152 / DSM 7513) protein is NAD(+)--arginine ADP-ribosyltransferase Lart1.